A 1304-amino-acid polypeptide reads, in one-letter code: NAD-dependent protein deacetylase Sir2B (1304 aa).

The 439-residue stretch at Thr28 to Lys466 folds into the Deacetylase sirtuin-type domain. NAD(+)-binding positions include Gly53–Trp72 and Gln274–Asp277. The Proton acceptor role is filled by His294. Residues Cys302, Cys305, Cys327, and Cys330 each coordinate Zn(2+). Residues Gly371–Ser373, Asn399–Gln401, and Val417 contribute to the NAD(+) site. Disordered regions lie at residues Glu545 to Ile585, Lys749 to Asn827, and Glu1154 to Asn1203. 3 stretches are compositionally biased toward low complexity: residues Asn548 to Ile585, Asn756 to His806, and Asp1182 to Asn1203.

It belongs to the sirtuin family. Class IV subfamily. It depends on Zn(2+) as a cofactor.

The enzyme catalyses N(6)-acetyl-L-lysyl-[protein] + NAD(+) + H2O = 2''-O-acetyl-ADP-D-ribose + nicotinamide + L-lysyl-[protein]. In terms of biological role, regulates the expression of the surface antigen-coding var genes central to the malaria pathogenesis. Cooperates with Sir2A to mediate silencing and mutual exclusive expression of only 1 of the 60 subtelomeric var genes at a time, coding for functionally different but epitopically variant versions of the erythrocyte membrane protein 1 (PfEMP1) molecule, to evade the detection by host immune surveillance. The sequence is that of NAD-dependent protein deacetylase Sir2B from Plasmodium falciparum (isolate 3D7).